A 1126-amino-acid polypeptide reads, in one-letter code: Formin-B (1126 aa).

Residues methionine 1–asparagine 21 form a disordered region. The 369-residue stretch at glutamate 38–serine 406 folds into the GBD/FH3 domain. Over residues leucine 427–asparagine 447 the composition is skewed to low complexity. The segment at leucine 427–proline 462 is disordered. Residues valine 448–proline 462 show a composition bias toward polar residues. Residues glutamine 463–leucine 514 are a coiled coil. A compositionally biased stretch (polar residues) spans serine 518–proline 532. Disordered stretches follow at residues serine 518 to serine 619 and alanine 1004 to threonine 1078. The FH1 domain maps to asparagine 527–proline 611. The segment covering glycine 543–glycine 597 has biased composition (pro residues). Composition is skewed to low complexity over residues glycine 598–valine 607, alanine 1009–serine 1022, and serine 1032–glutamine 1064. The region spanning proline 612–serine 1011 is the FH2 domain. A coiled-coil region spans residues lysine 980–alanine 1010. Positions aspartate 1071–serine 1100 constitute a DAD domain.

The protein belongs to the formin homology family. Diaphanous subfamily. In terms of assembly, interacts (via GBD/FH3 domain) with activated Rho-GTPases. Interacts with pfyA and pfyB.

Functionally, formins play an important role in the nucleation of actin and the formation of linear actin filaments. The protein is Formin-B (forB) of Dictyostelium discoideum (Social amoeba).